We begin with the raw amino-acid sequence, 574 residues long: Sulfate adenylyltransferase (574 aa).

Residues 1–169 (MANPPHGGVL…IEAINKLNHY (169 aa)) are N-terminal. The tract at residues 170-394 (DYVALRYTPA…LRESSPPRHT (225 aa)) is catalytic. Gln-197 contacts sulfate. ATP contacts are provided by residues 197–200 (QTRN) and 291–294 (GRDH). Catalysis depends on residues Thr-198, Arg-199, and Asn-200. Arg-199 provides a ligand contact to sulfate. Ala-295 contacts sulfate. Residue Val-333 participates in ATP binding. An allosteric regulation domain; adenylyl-sulfate kinase-like region spans residues 395-574 (QGFTIFLTGY…LETEGFFDRS (180 aa)). 3'-phosphoadenylyl sulfate is bound by residues 434–437 (DTVR), Arg-451, 477–478 (IA), and Arg-516.

The protein in the N-terminal section; belongs to the sulfate adenylyltransferase family. It in the C-terminal section; belongs to the APS kinase family. Homohexamer. Dimer of trimers.

It is found in the cytoplasm. The catalysed reaction is sulfate + ATP + H(+) = adenosine 5'-phosphosulfate + diphosphate. It participates in sulfur metabolism; hydrogen sulfide biosynthesis; sulfite from sulfate: step 1/3. Its activity is regulated as follows. Allosterically inhibited by 3'-phosphoadenosine 5'-phosphosulfate (PAPS). Its function is as follows. Catalyzes the first intracellular reaction of sulfate assimilation, forming adenosine-5'-phosphosulfate (APS) from inorganic sulfate and ATP. Plays an important role in sulfate activation as a component of the biosynthesis pathway of sulfur-containing amino acids. In Aspergillus fumigatus (strain ATCC MYA-4609 / CBS 101355 / FGSC A1100 / Af293) (Neosartorya fumigata), this protein is Sulfate adenylyltransferase.